We begin with the raw amino-acid sequence, 628 residues long: MBT domain-containing protein 1 (628 aa).

The tract at residues 1–31 is disordered; that stretch reads MFDGYDSCSEDTSSSSSSEESEEEVAPLPSN. The FCS-type zinc finger occupies 45 to 80; that stretch reads PDGKSGMATCEMCGMVGVRDAFYSKTKRFCSVSCSR. Positions 54, 57, 74, and 78 each coordinate Zn(2+). K115 carries the N6-acetyllysine modification. 4 MBT repeats span residues 141–245, 253–350, 351–456, and 464–560; these read FSWG…LVPP, TNWK…IGHR, FKRS…LTPP, and FKWF…LQPP. 2 disordered regions span residues 560-590 and 606-628; these read PASQSSRENQSASSKQKKKAKSQQYKGHKKM and NFLQGASDQESNGSANFYIKQEP. Low complexity predominate over residues 562 to 573; sequence SQSSRENQSASS. Residues 574–590 are compositionally biased toward basic residues; that stretch reads KQKKKAKSQQYKGHKKM. Over residues 609–620 the composition is skewed to polar residues; the sequence is QGASDQESNGSA.

Monomer. Component of the NuA4 histone acetyltransferase complex. Interacts with EPC1; interaction is direct and promotes recruitment of MBTD1 into the NuA4 histone acetyltransferase complex.

Its subcellular location is the nucleus. It localises to the chromosome. In terms of biological role, chromatin reader component of the NuA4 histone acetyltransferase complex, a multiprotein complex involved in transcriptional activation of select genes principally by acetylation of nucleosomal histones H4 and H2A. The NuA4 complex plays a direct role in repair of DNA double-strand breaks (DSBs) by promoting homologous recombination (HR). MBTD1 specifically recognizes and binds monomethylated and dimethylated 'Lys-20' on histone H4 (H4K20me1 and H4K20me2, respectively). In the NuA4 complex, MBTD1 promotes recruitment of the complex to H4K20me marks by competing with TP53BP1 for binding to H4K20me. Following recruitment to H4K20me at DNA breaks, the NuA4 complex catalyzes acetylation of 'Lys-15' on histone H2A (H2AK15), blocking the ubiquitination mark required for TP53BP1 localization at DNA breaks, thereby promoting homologous recombination (HR). The polypeptide is MBT domain-containing protein 1 (Homo sapiens (Human)).